The following is a 47-amino-acid chain: Gas vesicle protein A (47 aa).

This sequence belongs to the gas vesicle GvpA family. In terms of assembly, the gas vesicle shell is 2 nm thick and consists of a single layer of this protein. It forms helical ribs nearly perpendicular to the long axis of the vesicle.

It is found in the gas vesicle shell. Its function is as follows. Gas vesicles are hollow, gas filled proteinaceous nanostructures found in some microorganisms. During planktonic growth they allow positioning of the organism at a favorable depth for light or nutrient acquisition. GvpA forms the protein shell. This Dactylococcopsis salina (Myxobaktron salinum) protein is Gas vesicle protein A.